We begin with the raw amino-acid sequence, 150 residues long: MSTLEQKLTEIISAPVEALGYELVGIEFIRGRQSTLRIYIDSDDGITVDACADVSHQVSAVLDVEDPITVAYNLEVSSPGLDRPMFTAEHYTRYLGEEVTLVLRMAMQNRRKWQGIIKAVDGEMITVTVDGKDEVFALSNIQKANLVPHF.

Belongs to the RimP family.

Its subcellular location is the cytoplasm. Required for maturation of 30S ribosomal subunits. The chain is Ribosome maturation factor RimP from Yersinia pestis bv. Antiqua (strain Antiqua).